Consider the following 205-residue polypeptide: Non-structural protein NS3 (205 aa).

Residues 177–205 are disordered; sequence GTRSPETGCRKVTSGLPHGASGGSGTRQG. The segment covering 196–205 has biased composition (gly residues); the sequence is ASGGSGTRQG.

This sequence belongs to the orbivirus NS3 family.

May play a role in the release of virions from infected cells. This Broadhaven virus (BRD) protein is Non-structural protein NS3 (Segment-10).